The sequence spans 620 residues: Chaperone protein HscA homolog (620 aa).

It belongs to the heat shock protein 70 family.

Functionally, chaperone involved in the maturation of iron-sulfur cluster-containing proteins. Has a low intrinsic ATPase activity which is markedly stimulated by HscB. In Shewanella putrefaciens (strain CN-32 / ATCC BAA-453), this protein is Chaperone protein HscA homolog.